Reading from the N-terminus, the 195-residue chain is Probable DNA-directed RNA polymerase subunit delta (195 aa).

Positions 14–83 (LSMIEVARAI…GDNKWGLRSW (70 aa)) constitute an HTH HARE-type domain. 2 stretches are compositionally biased toward acidic residues: residues 120 to 138 (DSDA…DAYE) and 145 to 195 (YDDE…TSEE). A disordered region spans residues 120 to 195 (DSDAIDYNAD…SDDDAETSEE (76 aa)).

It belongs to the RpoE family. As to quaternary structure, RNAP is composed of a core of 2 alpha, a beta and a beta' subunits. The core is associated with a delta subunit and one of several sigma factors.

Its function is as follows. Participates in both the initiation and recycling phases of transcription. In the presence of the delta subunit, RNAP displays an increased specificity of transcription, a decreased affinity for nucleic acids, and an increased efficiency of RNA synthesis because of enhanced recycling. In Streptococcus pneumoniae serotype 2 (strain D39 / NCTC 7466), this protein is Probable DNA-directed RNA polymerase subunit delta.